The sequence spans 324 residues: Aprataxin (324 aa).

An FHA-like domain is found at 23-72 (SVTLGRGPDTKIKDKKCSREQVELRADCNRGFVTVKQLGVNPTLVDDVVV). Residues 100-160 (TEDTSRSKPS…QGLKASMQDP (61 aa)) form a disordered region. Positions 111–125 (RAQQIQSPTKTTADV) are enriched in polar residues. One can recognise an HIT domain in the interval 150 to 255 (SQGLKASMQD…ISQDFDSPCL (106 aa)). Interaction with DNA substrate stretches follow at residues 175 to 179 (DKYPK) and 237 to 238 (SM). Positions 240 to 244 (HVHLH) match the Histidine triad motif motif. H242 serves as the catalytic Tele-AMP-histidine intermediate. The C2H2-type zinc finger occupies 299-321 (LRCHVCGKEQTTIPKLKDHLKTH).

The protein localises to the nucleus. It is found in the nucleoplasm. The protein resides in the nucleolus. The catalysed reaction is a 5'-end adenosine-5'-diphospho-5'-2'-deoxyribonucleoside-DNA + H2O = a 5'-end 5'-phospho-2'-deoxyribonucleoside-DNA + AMP + 2 H(+). It catalyses the reaction a 5'-end adenosine-5'-diphospho-5'-ribonucleoside-2'-deoxyribonucleotide-DNA + H2O = a 5'-end 5'-phospho-ribonucleoside-2'-deoxyribonucleotide-DNA + AMP + 2 H(+). It carries out the reaction a 3'-end 2'-deoxyribonucleotide-3'-diphospho-5'-guanosine-DNA + H2O = a 3'-end 2'-deoxyribonucleotide 3'-phosphate-DNA + GMP + 2 H(+). In terms of biological role, DNA-binding protein involved in single-strand DNA break repair, double-strand DNA break repair and base excision repair. Resolves abortive DNA ligation intermediates formed either at base excision sites, or when DNA ligases attempt to repair non-ligatable breaks induced by reactive oxygen species. Catalyzes the release of adenylate groups covalently linked to 5'-phosphate termini, resulting in the production of 5'-phosphate termini that can be efficiently rejoined. Also able to hydrolyze adenosine 5'-monophosphoramidate (AMP-NH(2)) and diadenosine tetraphosphate (AppppA), but with lower catalytic activity. Likewise, catalyzes the release of 3'-linked guanosine (DNAppG) and inosine (DNAppI) from DNA, but has higher specific activity with 5'-linked adenosine (AppDNA). This Danio rerio (Zebrafish) protein is Aprataxin (aptx).